The sequence spans 942 residues: Protein inturned (942 aa).

Disordered stretches follow at residues 1–56 (MAGL…PEWL) and 128–156 (LPRR…KTGV). Residues 22-32 (SQEEEEEEGDS) are compositionally biased toward acidic residues. Over residues 33 to 48 (DAGASSLGSYSSASSD) the composition is skewed to low complexity. Positions 137-156 (SSNNGPVSILKHQSSQKTGV) are enriched in polar residues. A PDZ domain is found at 185-267 (LLEVLVGIIH…PMQVKLTFEN (83 aa)). Residues S674 and S678 each carry the phosphoserine modification. The interval 707–751 (KARKPSPSRIGGGREPTEGEESAGLSPHATPDAVRKQRESEGSDD) is disordered.

The protein belongs to the inturned family. In terms of assembly, component of the CPLANE (ciliogenesis and planar polarity effectors) complex, composed of INTU, FUZ and WDPCP. Interacts with CPLANE1. Interacts with NPHP4 and DAAM1; INTU is mediating the interaction between NPHP4 and DAAM1. Widely expressed in E8.5 and E9.5 wild type embryos. Present in various adult organs (at protein level).

Its subcellular location is the cytoplasm. The protein localises to the cell surface. The protein resides in the cytoskeleton. It is found in the cilium basal body. It localises to the microtubule organizing center. Its subcellular location is the centrosome. The protein localises to the centriole. Functionally, plays a key role in ciliogenesis and embryonic development. Regulator of cilia formation by controlling the organization of the apical actin cytoskeleton and the positioning of the basal bodies at the apical cell surface, which in turn is essential for the normal orientation of elongating ciliary microtubules. Plays a key role in definition of cell polarity via its role in ciliogenesis but not via conversion extension. Has an indirect effect on hedgehog signaling. Proposed to function as core component of the CPLANE (ciliogenesis and planar polarity effectors) complex involved in the recruitment of peripheral IFT-A proteins to basal bodies. Required for recruitment of CPLANE2 to the mother centriole. Binds phosphatidylinositol 3-phosphate with highest affinity, followed by phosphatidylinositol 4-phosphate and phosphatidylinositol 5-phosphate. This chain is Protein inturned (Intu), found in Mus musculus (Mouse).